The primary structure comprises 251 residues: Flap endonuclease Xni (251 aa).

Asp-104 lines the Mg(2+) pocket. In terms of domain architecture, 5'-3' exonuclease spans Val-160–Leu-249. K(+)-binding residues include Leu-171, Ala-172, Pro-180, Val-182, and Ile-185. The interval Gly-184–Ser-189 is interaction with DNA.

It belongs to the Xni family. The cofactor is Mg(2+). Requires K(+) as cofactor.

In terms of biological role, has flap endonuclease activity. During DNA replication, flap endonucleases cleave the 5'-overhanging flap structure that is generated by displacement synthesis when DNA polymerase encounters the 5'-end of a downstream Okazaki fragment. The chain is Flap endonuclease Xni from Salmonella schwarzengrund (strain CVM19633).